Here is a 380-residue protein sequence, read N- to C-terminus: MKFTKTALFTVLAATAFAAQAGQYPDLPEGIKAGAGALIGDTVYVGLGGTGTTKFYSLNLKDPKEWKEIAEFPGGKRNQPVAAGVNGKLYVFGGFQDTDVAKNQIINDAYEYNPADNTWTKLSTRSPRSTSVGASVAADGGKIYFVGGVNHEIWNGLFQDVKAAGGDKEKEKAIFDPYFNLRAQDFFFSPEIISYEPANNVWRNEGYFPYSGRAGAAVAIKDGKLLVVNGEVKAGLRSPGTALGTIGKDGVTWKKLGDLPAPTGYDKQDGIAGGMGGYTNGHYIVTGGANFPGALANYEKGIMDAHRTGGLKKTYHKAVYALDGKTGNWKIVGELPATIGYGLAVSYNNKVLLIGGETDGGKPLSAVQTMSYDGKKLTVE.

Positions 1 to 21 (MKFTKTALFTVLAATAFAAQA) are cleaved as a signal peptide. Kelch repeat units lie at residues 42–86 (TVYV…AGVN), 88–140 (KLYV…AADG), 142–176 (KIYF…AIFD), 177–222 (PYFN…AIKD), 225–274 (LLVV…IAGG), 296–349 (ANYE…SYNN), and 351–380 (VLLI…LTVE). Glu231 acts as the Proton acceptor in catalysis.

It belongs to the NanM family. In terms of assembly, homodimer.

The protein localises to the periplasm. The enzyme catalyses N-acetyl-alpha-neuraminate = N-acetyl-beta-neuraminate. In terms of biological role, converts alpha-N-acetylneuranimic acid (Neu5Ac) to the beta-anomer, accelerating the equilibrium between the alpha- and beta-anomers. Probably facilitates sialidase-negative bacteria to compete successfully for limited amounts of extracellular Neu5Ac, which is likely taken up in the beta-anomer. In addition, the rapid removal of sialic acid from solution might be advantageous to the bacterium to damp down host responses. In Pasteurella multocida (strain Pm70), this protein is N-acetylneuraminate epimerase.